A 188-amino-acid chain; its full sequence is Peptide methionine sulfoxide reductase MsrA (188 aa).

The disordered stretch occupies residues 1 to 25 (MEGNEKAEQKNATSEESTDIFENPG). Cys-37 is a catalytic residue.

It belongs to the MsrA Met sulfoxide reductase family.

The catalysed reaction is L-methionyl-[protein] + [thioredoxin]-disulfide + H2O = L-methionyl-(S)-S-oxide-[protein] + [thioredoxin]-dithiol. It carries out the reaction [thioredoxin]-disulfide + L-methionine + H2O = L-methionine (S)-S-oxide + [thioredoxin]-dithiol. Has an important function as a repair enzyme for proteins that have been inactivated by oxidation. Catalyzes the reversible oxidation-reduction of methionine sulfoxide in proteins to methionine. The sequence is that of Peptide methionine sulfoxide reductase MsrA from Methanosarcina acetivorans (strain ATCC 35395 / DSM 2834 / JCM 12185 / C2A).